A 1143-amino-acid polypeptide reads, in one-letter code: cGMP-specific 3',5'-cyclic phosphodiesterase (1143 aa).

Composition is skewed to low complexity over residues 1-19 and 31-45; these read MHGPVSRSSSSSNMTDVSS and TTSSSSAATTSASSS. The disordered stretch occupies residues 1–167; it reads MHGPVSRSSS…KASTTASQQD (167 aa). The span at 46–59 shows a compositional bias: polar residues; sequence KPLTNGANKTTIST. The span at 75 to 84 shows a compositional bias: low complexity; it reads GAIPASSSSG. The span at 96–107 shows a compositional bias: polar residues; that stretch reads SNNNRPAATNRS. A compositionally biased stretch (low complexity) spans 131–153; it reads SSSSPSQSPSQTQASIQTQTSQQ. GAF domains are found at residues 272 to 424 and 456 to 637; these read DIDV…GIGI and NLEC…GLGI. The PDEase domain maps to 667-990; it reads SQDQTEKLTQ…RNWQDLAEKV (324 aa). His743 functions as the Proton donor in the catalytic mechanism. Residues His747, His783, Asp784, and Asp894 each contribute to the a divalent metal cation site. 2 disordered regions span residues 1031-1060 and 1090-1143; these read QQSQHGSEDSHTPEHQRSGSRLSMKKTGAL and SHVS…CALL. Composition is skewed to basic and acidic residues over residues 1036-1047 and 1090-1100; these read GSEDSHTPEHQR and SHVSEDMDDKS. Over residues 1109 to 1127 the composition is skewed to low complexity; sequence ASGSMGRMSASSSTSSTGG. The segment covering 1133–1143 has biased composition (basic residues); the sequence is SKKRSKLCALL. The residue at position 1140 (Cys1140) is a Cysteine methyl ester. The S-farnesyl cysteine moiety is linked to residue Cys1140. Positions 1141–1143 are cleaved as a propeptide — removed in mature form; it reads ALL.

Belongs to the cyclic nucleotide phosphodiesterase family. In terms of assembly, interacts with PrBP. Requires a divalent metal cation as cofactor.

The protein resides in the cell membrane. It carries out the reaction 3',5'-cyclic GMP + H2O = GMP + H(+). Has a role regulating cGMP transport in Malpighian tubule principal cells. The sequence is that of cGMP-specific 3',5'-cyclic phosphodiesterase from Drosophila simulans (Fruit fly).